We begin with the raw amino-acid sequence, 86 residues long: Small ribosomal subunit protein bS20 (86 aa).

A disordered region spans residues 1–27 (MANSKSAKKRAIQAEKRRQHNASRRSM).

It belongs to the bacterial ribosomal protein bS20 family.

Functionally, binds directly to 16S ribosomal RNA. The sequence is that of Small ribosomal subunit protein bS20 from Vibrio atlanticus (strain LGP32) (Vibrio splendidus (strain Mel32)).